A 327-amino-acid polypeptide reads, in one-letter code: Olfactory receptor 9G4 (327 aa).

The Extracellular portion of the chain corresponds to 1 to 43; the sequence is MIFPSHDSQAFTSVDMEVGNCTILTEFILLGFSADSQWQPILF. Asparagine 20 carries an N-linked (GlcNAc...) asparagine glycan. Residues 44 to 64 traverse the membrane as a helical segment; the sequence is GVFLMLYLITLSGNMTLVILI. The Cytoplasmic portion of the chain corresponds to 65 to 71; that stretch reads RTDSHLH. Residues 72 to 92 form a helical membrane-spanning segment; the sequence is TPMYFFIGNLSFLDFWYTSVY. The Extracellular portion of the chain corresponds to 93–113; that stretch reads TPKILASCVSEDKRISLAGCG. A disulfide bond links cysteine 112 and cysteine 194. A helical transmembrane segment spans residues 114–134; the sequence is AQLFFSCVVAYTECYLLAAMA. At 135-152 the chain is on the cytoplasmic side; the sequence is YDRHAAICNPLLYSGTMS. A helical membrane pass occupies residues 153–173; that stretch reads TALCTGLVAGSYIGGFLNAIA. Over 174–212 the chain is Extracellular; sequence HTANTFRLHFCGKNIIDHFFCDAPPLVKMSCTNTRVYEK. A helical membrane pass occupies residues 213-233; the sequence is VLLGVVGFTVLSSILAILISY. The Cytoplasmic segment spans residues 234 to 252; sequence VNILLAILRIHSASGRHKA. A helical transmembrane segment spans residues 253-273; that stretch reads FSTCASHLISVMLFYGSLLFM. Over 274-286 the chain is Extracellular; sequence YSRPSSTYSLERD. A helical transmembrane segment spans residues 287–307; the sequence is KVAALFYTVINPLLNPLIYSL. The Cytoplasmic portion of the chain corresponds to 308 to 327; the sequence is RNKDIKEAFRKATQTIQPQT.

The protein belongs to the G-protein coupled receptor 1 family.

The protein localises to the cell membrane. Its function is as follows. Odorant receptor. The chain is Olfactory receptor 9G4 (OR9G4) from Homo sapiens (Human).